The primary structure comprises 504 residues: MTVPALASASGLLQVASLLGLLLLLLKAAQLYLHRQWLLKALQQFPSPPSHWLYGHSREFQEESELPPLLKRVEKYPSACALWRWGTRAMVLVYDPDYMKVVLARSDPKNSVVYRLLIPWIGCGLLLLNGQTWFQRRRMLTPAFHYDILKPYVGLMAKSVQVMLDKWEQLVAQDPRLEIVGPVSLMTLDTIMKCAFSHQGSAQTDGDSHSYIQAIWDLKNLFSIRTKSAFLQNDIIYRLSPEGRKNHRAARIAHQHTDRVIQLRKAQLQKQGEMENVRKKRHLDFLDILLLARMEKGNSLSDTDLRAEVDTFMFEGHDTTASGISWILYALASHPEHQQRCREEIQGLLGDGTSITWDHLDQMPYTTMCIKEALRLYPPVPGVSRELSKPITFPDGRSLPAGITLSLSIYGLHHNPQVWPNPEEFDPSRFAPGSARHSHAFMPFSGGSRNCIGKQFAMNEMKVAVALTLLRFELAPDPSRKPIATPEVVLNSKNGIHLKLRKLP.

Transmembrane regions (helical) follow at residues 6–26 (LASASGLLQVASLLGLLLLLL) and 112–132 (VVYRLLIPWIGCGLLLLNGQT). Heme is bound at residue Cys451.

This sequence belongs to the cytochrome P450 family. The cofactor is heme.

It is found in the endoplasmic reticulum membrane. It carries out the reaction an omega-methyl-long-chain fatty acid + reduced [NADPH--hemoprotein reductase] + O2 = an omega-hydroxy-long-chain fatty acid + oxidized [NADPH--hemoprotein reductase] + H2O + H(+). Functionally, catalyzes the omega- and (omega-1)-hydroxylation of various fatty acids such as laurate and palmitate. Has no activity toward taurochenodeoxycholic acid. The chain is Cytochrome P450 4A24 (CYP4A24) from Sus scrofa (Pig).